The primary structure comprises 187 residues: Lipid A acyltransferase PagP (187 aa).

Positions 1-26 (MIVAKKYFLVLSFLFVQFALLPQAFS) are cleaved as a signal peptide. Residues His59, Asp102, and Ser103 contribute to the active site.

It belongs to the lipid A palmitoyltransferase family. Homodimer.

The protein resides in the cell outer membrane. It carries out the reaction a lipid A + a 1,2-diacyl-sn-glycero-3-phosphocholine = a hepta-acyl lipid A + a 2-acyl-sn-glycero-3-phosphocholine. The catalysed reaction is a lipid IVA + a 1,2-diacyl-sn-glycero-3-phosphocholine = a lipid IVB + a 2-acyl-sn-glycero-3-phosphocholine. It catalyses the reaction a lipid IIA + a 1,2-diacyl-sn-glycero-3-phosphocholine = a lipid IIB + a 2-acyl-sn-glycero-3-phosphocholine. In terms of biological role, transfers a fatty acid residue from the sn-1 position of a phospholipid to the N-linked hydroxyfatty acid chain on the proximal unit of lipid A or its precursors. The protein is Lipid A acyltransferase PagP of Citrobacter koseri (strain ATCC BAA-895 / CDC 4225-83 / SGSC4696).